Here is a 950-residue protein sequence, read N- to C-terminus: Valine--tRNA ligase, mitochondrial (950 aa).

The N-terminal 90 residues, 1–90 (MFHFQRSFSS…ITIQDALARF (90 aa)), are a transit peptide targeting the mitochondrion. Positions 67–77 (PNITGKLHIGH) match the 'HIGH' region motif. The short motif at 556–560 (KMSKS) is the 'KMSKS' region element. Lys559 serves as a coordination point for ATP.

It belongs to the class-I aminoacyl-tRNA synthetase family.

Its subcellular location is the mitochondrion. It catalyses the reaction tRNA(Val) + L-valine + ATP = L-valyl-tRNA(Val) + AMP + diphosphate. In Schizosaccharomyces pombe (strain 972 / ATCC 24843) (Fission yeast), this protein is Valine--tRNA ligase, mitochondrial (vas1).